The sequence spans 198 residues: NAD(P)H dehydrogenase (quinone) (198 aa).

In terms of domain architecture, Flavodoxin-like spans valine 4–valine 189. Residues serine 10 to isoleucine 15 and threonine 78 to phenylalanine 80 contribute to the FMN site. Tyrosine 12 contacts NAD(+). Residue tryptophan 98 participates in substrate binding. FMN-binding positions include serine 113–glycine 118 and histidine 133.

Belongs to the WrbA family. The cofactor is FMN.

The catalysed reaction is a quinone + NADH + H(+) = a quinol + NAD(+). It catalyses the reaction a quinone + NADPH + H(+) = a quinol + NADP(+). The chain is NAD(P)H dehydrogenase (quinone) from Escherichia coli O157:H7.